Reading from the N-terminus, the 398-residue chain is MKVLVLNCGSSSVKYKLLEMPKGDVLAQGGVEKLGLPGSFLKLTMPNGEKVVLEKDMPEHTIAVEFILSVLKDDKYGCIKSYEEIDAVGHRLVHGGEKFSNSVEITPEVIAKVEECIPLAPLHNPANLKGVVAIEKLLPGIRQVGVFDTAFFQTMPEHVYRYALPYDMCNKHGVRRYGFHGTSHRYVSARACEILGLDYDKTRIITAHIGNGASIAAIKNGKALDVSLGMTPVEGLMMGTRSGDVDPGVLTFLMEAEGLEAAGISELINKKSGVLGVSGVSSDMREIEDAIKNGNERATLAMTMYDYRIKKYVGAYAAAMGGVDVLVFTGGVGENQYTTREKVCTDMEFMGIVFDSKVNEGMRGKEMVISKPESKVTVIVVPTDEEYMIASDTMTILK.

N7 contributes to the Mg(2+) binding site. K14 contributes to the ATP binding site. Residue R91 participates in substrate binding. Catalysis depends on D148, which acts as the Proton donor/acceptor. ATP is bound by residues H208–G212, D283–R285, and G331–N335. E385 serves as a coordination point for Mg(2+).

The protein belongs to the acetokinase family. In terms of assembly, homodimer. Requires Mg(2+) as cofactor. Mn(2+) serves as cofactor.

It localises to the cytoplasm. The catalysed reaction is acetate + ATP = acetyl phosphate + ADP. It participates in metabolic intermediate biosynthesis; acetyl-CoA biosynthesis; acetyl-CoA from acetate: step 1/2. Functionally, catalyzes the formation of acetyl phosphate from acetate and ATP. Can also catalyze the reverse reaction. The polypeptide is Acetate kinase (Porphyromonas gingivalis (strain ATCC BAA-308 / W83)).